The primary structure comprises 179 residues: Large ribosomal subunit protein uL5 (179 aa).

Belongs to the universal ribosomal protein uL5 family. Part of the 50S ribosomal subunit; part of the 5S rRNA/L5/L18/L25 subcomplex. Contacts the 5S rRNA and the P site tRNA. Forms a bridge to the 30S subunit in the 70S ribosome.

Functionally, this is one of the proteins that bind and probably mediate the attachment of the 5S RNA into the large ribosomal subunit, where it forms part of the central protuberance. In the 70S ribosome it contacts protein S13 of the 30S subunit (bridge B1b), connecting the 2 subunits; this bridge is implicated in subunit movement. Contacts the P site tRNA; the 5S rRNA and some of its associated proteins might help stabilize positioning of ribosome-bound tRNAs. The polypeptide is Large ribosomal subunit protein uL5 (Clostridium beijerinckii (strain ATCC 51743 / NCIMB 8052) (Clostridium acetobutylicum)).